The following is a 149-amino-acid chain: Ribonuclease pancreatic (149 aa).

The N-terminal stretch at 1–25 (MGLEKSFILFSLLVLVLGWVQPSLG) is a signal peptide. Substrate contacts are provided by Lys32 and Arg35. His37 functions as the Proton acceptor in the catalytic mechanism. 4 disulfide bridges follow: Cys51–Cys109, Cys65–Cys120, Cys83–Cys135, and Cys90–Cys97. Residues 66–70 (KPVNT), Lys91, and Arg110 each bind substrate. His144 (proton donor) is an active-site residue.

Belongs to the pancreatic ribonuclease family. Monomer. Interacts with and forms tight 1:1 complexes with RNH1. Dimerization of two such complexes may occur. Interaction with RNH1 inhibits this protein. Pancreas.

The protein localises to the secreted. It catalyses the reaction an [RNA] containing cytidine + H2O = an [RNA]-3'-cytidine-3'-phosphate + a 5'-hydroxy-ribonucleotide-3'-[RNA].. It carries out the reaction an [RNA] containing uridine + H2O = an [RNA]-3'-uridine-3'-phosphate + a 5'-hydroxy-ribonucleotide-3'-[RNA].. Endonuclease that catalyzes the cleavage of RNA on the 3' side of pyrimidine nucleotides. Acts on single-stranded and double-stranded RNA. In Leopoldamys edwardsi (Edwards's long-tailed giant rat), this protein is Ribonuclease pancreatic (RNASE1).